The following is a 490-amino-acid chain: Chromosomal replication initiator protein DnaA (490 aa).

Residues Met-1–Thr-91 are domain I, interacts with DnaA modulators. Positions Thr-91–Gln-147 are domain II. The tract at residues Gly-148–Ala-370 is domain III, AAA+ region. Gly-192, Gly-194, Lys-195, and Thr-196 together coordinate ATP. A domain IV, binds dsDNA region spans residues Gly-371 to Gly-490.

This sequence belongs to the DnaA family. In terms of assembly, oligomerizes as a right-handed, spiral filament on DNA at oriC.

It localises to the cytoplasm. Plays an essential role in the initiation and regulation of chromosomal replication. ATP-DnaA binds to the origin of replication (oriC) to initiate formation of the DNA replication initiation complex once per cell cycle. Binds the DnaA box (a 9 base pair repeat at the origin) and separates the double-stranded (ds)DNA. Forms a right-handed helical filament on oriC DNA; dsDNA binds to the exterior of the filament while single-stranded (ss)DNA is stabiized in the filament's interior. The ATP-DnaA-oriC complex binds and stabilizes one strand of the AT-rich DNA unwinding element (DUE), permitting loading of DNA polymerase. After initiation quickly degrades to an ADP-DnaA complex that is not apt for DNA replication. Binds acidic phospholipids. The polypeptide is Chromosomal replication initiator protein DnaA (Caulobacter vibrioides (strain ATCC 19089 / CIP 103742 / CB 15) (Caulobacter crescentus)).